We begin with the raw amino-acid sequence, 396 residues long: MAKKIVSDLDLKGKVVLERADFNVPLKDGKITNDNRIVQALPTIKYIIEQGGKLVLFSHLGKVKQESDKEGLTLKPVADALSEKLGKEVTFVPETRGKKLESAIKNLSEGDVLLVENTRFEDLDGKKESKNDPELGKYWASLGDVFVNDAFGTAHREHASNVGISTHLETAAGYLMEKEIKFIGGVVNDPHKPVVAILGGAKVSDKIGVIKNLVNIADKILIGGGMAYTFLKAQGKEIGLSLLEEDKIDFAKELLESNGDQIVLPVDAKVAKEFSNDAEITEVSIDNIPSDQEAMDVGPKTVELFSKELEGAHTVVWNGPMGVFEFSNFAQGTIGVCKAIANLKDATTIIGGGDSAAAAISLGFEDDFTHISTGGGASLEYLEGIELPGIKAINDK.

Substrate contacts are provided by residues 21–23 (DFN), R36, 59–62 (HLGK), R119, and R156. ATP is bound by residues K206, E325, and 352-355 (GGDS).

It belongs to the phosphoglycerate kinase family. As to quaternary structure, monomer.

It is found in the cytoplasm. It carries out the reaction (2R)-3-phosphoglycerate + ATP = (2R)-3-phospho-glyceroyl phosphate + ADP. It participates in carbohydrate degradation; glycolysis; pyruvate from D-glyceraldehyde 3-phosphate: step 2/5. This chain is Phosphoglycerate kinase, found in Staphylococcus haemolyticus (strain JCSC1435).